The following is a 774-amino-acid chain: RNA exonuclease 5 (774 aa).

A compositionally biased stretch (basic and acidic residues) spans 1–19 (MEPEREGTERHPRKVRESR). The interval 1–22 (MEPEREGTERHPRKVRESRQAP) is disordered. One can recognise an Exonuclease domain in the interval 228–376 (LFGLDCEMCL…EDARTILELA (149 aa)). RRM domains lie at 505–579 (STVY…RPVT) and 600–679 (GSIY…RHLH).

The polypeptide is RNA exonuclease 5 (Homo sapiens (Human)).